Consider the following 774-residue polypeptide: Pentatricopeptide repeat-containing protein At4g20770 (774 aa).

PPR repeat units lie at residues 5 to 39, 40 to 70, 71 to 101, 102 to 136, 137 to 171, 172 to 203, 204 to 238, 239 to 270, 283 to 313, 314 to 348, 349 to 379, 380 to 414, 415 to 449, 450 to 480, 482 to 516, 518 to 552, 553 to 583, 584 to 618, 619 to 654, and 655 to 685; these read GNKYLASLLRCYRDERCKLSGKVIHGFIVRMGMKS, DTYLCNRLLDLYIECGDGDYARKVFDEMSVR, DVYSWNAFLTFRCKVGDLGEACEVFDGMPER, DVVSWNNMISVLVRKGFEEKALVVYKRMVCDGFLP, SRFTLASVLSACSKVLDGVFGMRCHGVAVKTGLDK, NIFVGNALLSMYAKCGFIVDYGVRVFESLSQP, NEVSYTAVIGGLARENKVLEAVQMFRLMCEKGVQV, DSVCLSNILSISAPREGCDSLSEIYGNELGKQ, DLHLNNSLLEIYAKNKDMNGAELIFAEMPEV, NVVSWNIMIVGFGQEYRSDKSVEFLTRMRDSGFQP, NEVTCISVLGACFRSGDVETGRRIFSSIPQP, SVSAWNAMLSGYSNYEHYEEAISNFRQMQFQNLKP, DKTTLSVILSSCARLRFLEGGKQIHGVVIRTEISK, NSHIVSGLIAVYSECEKMEISECIFDDCINE, DIACWNSMISGFRHNMLDTKALILFRRMHQTAVLC, NETSFATVLSSCSRLCSLLHGRQFHGLVVKSGYVS, DSFVETALTDMYCKCGEIDSARQFFDAVLRK, NTVIWNEMIHGYGHNGRGDEAVGLYRKMISSGEKP, DGITFVSVLTACSHSGLVETGLEILSSMQRIHGIEP, and ELDHYICIVDCLGRAGRLEDAEKLAEATPYK. Residues 690–765 are type E motif; the sequence is LWEILLSSCR…TPGQSWTTYG (76 aa).

The protein belongs to the PPR family. PCMP-E subfamily.

The polypeptide is Pentatricopeptide repeat-containing protein At4g20770 (PCMP-E35) (Arabidopsis thaliana (Mouse-ear cress)).